The following is a 223-amino-acid chain: Phosphoribosylformylglycinamidine synthase subunit PurQ (223 aa).

The Glutamine amidotransferase type-1 domain occupies 3-223 (FAVLVFPGSN…MVKSWREQHV (221 aa)). C85 acts as the Nucleophile in catalysis. Residues H193 and E195 contribute to the active site.

Part of the FGAM synthase complex composed of 1 PurL, 1 PurQ and 2 PurS subunits.

It localises to the cytoplasm. The enzyme catalyses N(2)-formyl-N(1)-(5-phospho-beta-D-ribosyl)glycinamide + L-glutamine + ATP + H2O = 2-formamido-N(1)-(5-O-phospho-beta-D-ribosyl)acetamidine + L-glutamate + ADP + phosphate + H(+). It catalyses the reaction L-glutamine + H2O = L-glutamate + NH4(+). Its pathway is purine metabolism; IMP biosynthesis via de novo pathway; 5-amino-1-(5-phospho-D-ribosyl)imidazole from N(2)-formyl-N(1)-(5-phospho-D-ribosyl)glycinamide: step 1/2. Its function is as follows. Part of the phosphoribosylformylglycinamidine synthase complex involved in the purines biosynthetic pathway. Catalyzes the ATP-dependent conversion of formylglycinamide ribonucleotide (FGAR) and glutamine to yield formylglycinamidine ribonucleotide (FGAM) and glutamate. The FGAM synthase complex is composed of three subunits. PurQ produces an ammonia molecule by converting glutamine to glutamate. PurL transfers the ammonia molecule to FGAR to form FGAM in an ATP-dependent manner. PurS interacts with PurQ and PurL and is thought to assist in the transfer of the ammonia molecule from PurQ to PurL. The chain is Phosphoribosylformylglycinamidine synthase subunit PurQ from Staphylococcus aureus (strain MSSA476).